A 262-amino-acid chain; its full sequence is MSARRRVTDFVKGKGPYVWVTAYDYPTAKIVDEAGVDGILVGDSLGMVVLGLPNTLGVTLADMIRHTQAVARARPRALVVADMPFMSYETGPRDALRNASKLIKAGADAVKLEGGAEYARIVEKLVKAGIPVMGHIGLNPQRVLALGGFKMVGRTEEQRRKLLDDAKALRDAGAFSLVIEFVPASVAKEITEAVDIPTICIGAGPHCDGQILVLHDIIGLTERPPSFAKRYANVADVIRSAVKQYVNEVKTGQFPSKEHFKE.

Mg(2+)-binding residues include D43 and D82. Residues 43–44 (DS), D82, and K111 contribute to the 3-methyl-2-oxobutanoate site. Residue E113 participates in Mg(2+) binding. E180 acts as the Proton acceptor in catalysis.

It belongs to the PanB family. In terms of assembly, homodecamer; pentamer of dimers. It depends on Mg(2+) as a cofactor.

The protein resides in the cytoplasm. It carries out the reaction 3-methyl-2-oxobutanoate + (6R)-5,10-methylene-5,6,7,8-tetrahydrofolate + H2O = 2-dehydropantoate + (6S)-5,6,7,8-tetrahydrofolate. It participates in cofactor biosynthesis; coenzyme A biosynthesis. Its function is as follows. Catalyzes the reversible reaction in which hydroxymethyl group from 5,10-methylenetetrahydrofolate is transferred onto alpha-ketoisovalerate to form ketopantoate. In Pyrobaculum aerophilum (strain ATCC 51768 / DSM 7523 / JCM 9630 / CIP 104966 / NBRC 100827 / IM2), this protein is 3-methyl-2-oxobutanoate hydroxymethyltransferase.